The sequence spans 205 residues: Protein N-terminal glutamine amidohydrolase (205 aa).

Active-site residues include cysteine 20, histidine 74, and aspartate 90.

This sequence belongs to the NTAQ1 family. In terms of assembly, monomer.

It catalyses the reaction N-terminal L-glutaminyl-[protein] + H2O = N-terminal L-glutamyl-[protein] + NH4(+). Mediates the side-chain deamidation of N-terminal glutamine residues to glutamate, an important step in N-end rule pathway of protein degradation. Conversion of the resulting N-terminal glutamine to glutamate renders the protein susceptible to arginylation, polyubiquitination and degradation as specified by the N-end rule. Does not act on substrates with internal or C-terminal glutamine and does not act on non-glutamine residues in any position. This is Protein N-terminal glutamine amidohydrolase (tun) from Drosophila willistoni (Fruit fly).